A 753-amino-acid polypeptide reads, in one-letter code: Polyribonucleotide nucleotidyltransferase (753 aa).

Residues aspartate 523 and aspartate 529 each contribute to the Mg(2+) site. Positions 589–648 (PRIISVRIPVDKIGAVIGPKGAMINQIQDDTGADITIEDDGTVLIGATDGASAEAARSAV) constitute a KH domain. The region spanning 660–732 (GERYLGTVVK…DRGKLSLSPV (73 aa)) is the S1 motif domain. The disordered stretch occupies residues 733-753 (GAESDAVAETADAIESSQTEA).

It belongs to the polyribonucleotide nucleotidyltransferase family. Mg(2+) serves as cofactor.

It is found in the cytoplasm. It carries out the reaction RNA(n+1) + phosphate = RNA(n) + a ribonucleoside 5'-diphosphate. In terms of biological role, involved in mRNA degradation. Catalyzes the phosphorolysis of single-stranded polyribonucleotides processively in the 3'- to 5'-direction. In Micrococcus luteus (strain ATCC 4698 / DSM 20030 / JCM 1464 / CCM 169 / CCUG 5858 / IAM 1056 / NBRC 3333 / NCIMB 9278 / NCTC 2665 / VKM Ac-2230) (Micrococcus lysodeikticus), this protein is Polyribonucleotide nucleotidyltransferase.